A 293-amino-acid chain; its full sequence is Ribosomal protein L11 methyltransferase (293 aa).

Positions 145, 166, 188, and 230 each coordinate S-adenosyl-L-methionine.

Belongs to the methyltransferase superfamily. PrmA family.

It localises to the cytoplasm. The enzyme catalyses L-lysyl-[protein] + 3 S-adenosyl-L-methionine = N(6),N(6),N(6)-trimethyl-L-lysyl-[protein] + 3 S-adenosyl-L-homocysteine + 3 H(+). Methylates ribosomal protein L11. This Shewanella baltica (strain OS195) protein is Ribosomal protein L11 methyltransferase.